Consider the following 395-residue polypeptide: MLPAVGSADEEEDPAEEDCPELVPIETTQSEEEEKSGLGAKIPVTIITGYLGAGKTTLLNYILTEQHSKRVAVILNEFGEGSALEKSLAVSQGGELYEEWLELRNGCLCCSVKDSGLRAIENLMQKKGKFDYILLETTGLADPGAVASMFWVDAELGSDIYLDGIITIVDSKYGLKHLTEEKPDGLINEATRQVALADAILINKTDLVPEEDVKKLRTTIRSINGLGQILETQRSRVDLSNVLDLHAFDSLSGISLQKKLQHVPGTQPHLDQSIVTITFEVPGNAKEEHLNMFIQNLLWEKNVRNKDNHCMEVIRLKGLVSIKDKSQQVIVQGVHELYDLEETPVSWKDDTERTNRLVLLGRNLDKDILKQLFIATVTETEKQWTTRFQEDQVCT.

Positions 1–22 (MLPAVGSADEEEDPAEEDCPEL) are disordered. The span at 8-20 (ADEEEDPAEEDCP) shows a compositional bias: acidic residues. Residues 17 to 24 (EDCPELVP) carry the psi-PxLVp motif motif. Residue 49–56 (GYLGAGKT) coordinates GTP. Residues Cys107, Cys109, and Cys110 each coordinate Zn(2+). The CXCC motif motif lies at 107-110 (CLCC). Residues 110 to 114 (CSVKD) and 203 to 206 (NKTD) each bind GTP. In terms of domain architecture, CobW C-terminal spans 274-377 (IVTITFEVPG…ILKQLFIATV (104 aa)).

This sequence belongs to the SIMIBI class G3E GTPase family. ZNG1 subfamily. In terms of tissue distribution, ubiquitously expressed. Up-regulated in cultured astrocytes treated with dopamine.

It localises to the nucleus. The catalysed reaction is GTP + H2O = GDP + phosphate + H(+). Its function is as follows. Zinc chaperone that directly transfers zinc cofactor to target metalloproteins, thereby activating them. Catalyzes zinc insertion into the active site of methionine aminopeptidase METAP1, which function to cleave the initiator methionine from polypeptides during or after protein translation. Mechanistically, the N-terminal psi-PxLVp motif binds to the C6H2-type zinc finger of inactive form of METAP1. After formation of the docked complex, zinc is transferred from the CXCC motif in the GTPase domain of ZNG1A to the zinc binding site in the peptidase domain of METAP1 in a process requiring GTP hydrolysis. GTP/GDP exchange is required for release of active METAP1. The protein is Zinc-regulated GTPase metalloprotein activator 1A of Homo sapiens (Human).